The chain runs to 98 residues: UPF0213 protein in ldhD 5'region (98 aa).

Residues 7 to 84 (NGFYFYVLWC…KKQSRKEKLK (78 aa)) enclose the GIY-YIG domain.

Belongs to the UPF0213 family.

The chain is UPF0213 protein in ldhD 5'region from Pediococcus acidilactici.